The primary structure comprises 157 residues: MKCPNCHKNGSRVVDSRPADNGHAIRRRRECEQCGYRFTTFERVEVTPLLVIKKNGTREEFQREKLLRGIVRAAEKRPVGIDEITEIVDKVENKLRSVGGTEVSSQLIGEYVMKILADVDEVAYIRYASVYREFKDMHAFADELRELMDREENNSKD.

The segment at 1–21 is disordered; that stretch reads MKCPNCHKNGSRVVDSRPADN. A zinc finger lies at 3–34; it reads CPNCHKNGSRVVDSRPADNGHAIRRRRECEQC. The ATP-cone domain maps to 49-139; sequence LLVIKKNGTR…VYREFKDMHA (91 aa).

Belongs to the NrdR family. The cofactor is Zn(2+).

Its function is as follows. Negatively regulates transcription of bacterial ribonucleotide reductase nrd genes and operons by binding to NrdR-boxes. The protein is Transcriptional repressor NrdR of Ligilactobacillus salivarius (strain UCC118) (Lactobacillus salivarius).